The following is a 412-amino-acid chain: Cathepsin D (412 aa).

The first 20 residues, 1-20 (MQPSSLLPLALCLLAAPASA), serve as a signal peptide directing secretion. Residues 21 to 64 (LVRIPLHKFTSIRRTMSEVGGSVEDLIAKGPVSKYSQAVPAVTE) constitute a propeptide, activation peptide. The O-linked (GalNAc...) threonine glycan is linked to threonine 63. The region spanning 79-407 (YYGEIGIGTP…DRDNNRVGFA (329 aa)) is the Peptidase A1 domain. 2 disulfide bridges follow: cysteine 91-cysteine 160 and cysteine 110-cysteine 117. Aspartate 97 is an active-site residue. Asparagine 134 and asparagine 263 each carry an N-linked (GlcNAc...) asparagine glycan. Cysteine 286 and cysteine 290 are disulfide-bonded. Aspartate 295 is an active-site residue. A disulfide bridge connects residues cysteine 329 and cysteine 366.

This sequence belongs to the peptidase A1 family. As to quaternary structure, consists of a light chain and a heavy chain. Interacts with ADAM30; this leads to activation of CTSD. Interacts with GRN; stabilizes CTSD; increases its proteolytic activity. Post-translationally, N- and O-glycosylated. Undergoes proteolytic cleavage and activation by ADAM30. In terms of processing, as well as the major heavy chain which starts at Leu-169, 2 minor forms starting at Gly-170 and Gly-171 have been identified. An additional form starting at Ala-168 has also been identified. As to expression, expressed in the aorta extracellular space (at protein level). Expressed in liver (at protein level).

Its subcellular location is the lysosome. It is found in the melanosome. The protein resides in the secreted. The protein localises to the extracellular space. The enzyme catalyses Specificity similar to, but narrower than, that of pepsin A. Does not cleave the 4-Gln-|-His-5 bond in B chain of insulin.. In terms of biological role, acid protease active in intracellular protein breakdown. Plays a role in APP processing following cleavage and activation by ADAM30 which leads to APP degradation. Involved in the pathogenesis of several diseases such as breast cancer and possibly Alzheimer disease. This Homo sapiens (Human) protein is Cathepsin D (CTSD).